Reading from the N-terminus, the 714-residue chain is BBSome complex member bbs-2 (714 aa).

Coiled coils occupy residues 332–361 (IREF…VEKD) and 597–627 (MTEV…DSIA).

Part of BBSome complex, that contains at least bbs-1, bbs-2, bbs-4, bbs-5, osm-12, bbs-8/ttc-8 and bbs-9. As to expression, expressed in ciliated cells including amphid and both inner and outer labial neurons of the head and in both phasmid neurons PHA and PHB in the tail at larval stages L1 and L2.

It localises to the cell projection. It is found in the cilium. The protein localises to the cytoplasm. Its subcellular location is the cytoskeleton. The protein resides in the cilium basal body. It localises to the cilium axoneme. In terms of biological role, component of the BBSome complex. The BBSome complex is thought to function as a coat complex required for sorting of specific membrane proteins to the primary cilia. The BBSome complex is required for ciliogenesis but is dispensable for centriolar satellite function. Required for proper BBSome complex assembly and its ciliary localization. Required for cilia biogenesis and both the assembly and movement of intraflagellar transport proteins along the ciliary axoneme. This Caenorhabditis elegans protein is BBSome complex member bbs-2.